Consider the following 486-residue polypeptide: Cysteine--tRNA ligase (486 aa).

Zn(2+) is bound at residue C29. The 'HIGH' region signature appears at 31–41 (VTVYDYCHLGH). C214, H239, and E243 together coordinate Zn(2+). Positions 271–275 (KMSKS) match the 'KMSKS' region motif. K274 is an ATP binding site.

It belongs to the class-I aminoacyl-tRNA synthetase family. In terms of assembly, monomer. Zn(2+) is required as a cofactor.

The protein localises to the cytoplasm. The enzyme catalyses tRNA(Cys) + L-cysteine + ATP = L-cysteinyl-tRNA(Cys) + AMP + diphosphate. The protein is Cysteine--tRNA ligase of Trichormus variabilis (strain ATCC 29413 / PCC 7937) (Anabaena variabilis).